Here is a 79-residue protein sequence, read N- to C-terminus: Putative antitoxin MM_2475 (79 aa).

The protein belongs to the UPF0330 family.

In terms of biological role, possibly the antitoxin component of a type II toxin-antitoxin (TA) system. This chain is Putative antitoxin MM_2475, found in Methanosarcina mazei (strain ATCC BAA-159 / DSM 3647 / Goe1 / Go1 / JCM 11833 / OCM 88) (Methanosarcina frisia).